The primary structure comprises 215 residues: UPF0502 protein YceH (215 aa).

Lys80 carries the N6-acetyllysine modification.

This sequence belongs to the UPF0502 family.

In Shigella boydii serotype 4 (strain Sb227), this protein is UPF0502 protein YceH.